The primary structure comprises 527 residues: Sulfate adenylyltransferase (527 aa).

Residues 1–176 (MPIPTPHGGK…LQGINYPKHY (176 aa)) form an N-terminal region. Residues 177 to 406 (DYVDARKTPT…LRETNPPRSK (230 aa)) are catalytic. Q206 serves as a coordination point for sulfate. Residues 206–209 (QTRN) and 302–305 (GRDH) each bind ATP. Residues T207, R208, and N209 contribute to the active site. A sulfate-binding site is contributed by R208. A sulfate-binding site is contributed by A306. Residue V344 participates in ATP binding. Positions 407–527 (QGFAILIDNS…VNYLKDQGFY (121 aa)) are required for oligomerization; adenylyl-sulfate kinase-like.

Belongs to the sulfate adenylyltransferase family. As to quaternary structure, homohexamer. Dimer of trimers.

Its subcellular location is the cytoplasm. It catalyses the reaction sulfate + ATP + H(+) = adenosine 5'-phosphosulfate + diphosphate. The protein operates within sulfur metabolism; hydrogen sulfide biosynthesis; sulfite from sulfate: step 1/3. In terms of biological role, catalyzes the first intracellular reaction of sulfate assimilation, forming adenosine-5'-phosphosulfate (APS) from inorganic sulfate and ATP. Plays an important role in sulfate activation as a component of the biosynthesis pathway of sulfur-containing amino acids. In Candida albicans (strain SC5314 / ATCC MYA-2876) (Yeast), this protein is Sulfate adenylyltransferase.